The following is a 269-amino-acid chain: Fructose-2,6-bisphosphatase TIGAR (269 aa).

Histidine 11 (tele-phosphohistidine intermediate) is an active-site residue. The active-site Proton donor/acceptor is glutamate 89.

Belongs to the phosphoglycerate mutase family. In terms of assembly, interacts with HK2; the interaction increases hexokinase HK2 activity in a hypoxia- and HIF1A-dependent manner, resulting in the regulation of mitochondrial membrane potential, thus increasing NADPH production and decreasing intracellular ROS levels. Expressed in olfactory bulb, cerebellum, and cortex. Expressed in neurons and astrocytes (at protein level). Expressed in intestinal crypt.

It is found in the cytoplasm. Its subcellular location is the nucleus. The protein resides in the mitochondrion. It catalyses the reaction beta-D-fructose 2,6-bisphosphate + H2O = beta-D-fructose 6-phosphate + phosphate. Its function is as follows. Fructose-bisphosphatase hydrolyzing fructose-2,6-bisphosphate as well as fructose-1,6-bisphosphate. Acts as a negative regulator of glycolysis by lowering intracellular levels of fructose-2,6-bisphosphate in a p53/TP53-dependent manner, resulting in the pentose phosphate pathway (PPP) activation and NADPH production. Contributes to the generation of reduced glutathione to cause a decrease in intracellular reactive oxygen species (ROS) content, correlating with its ability to protect cells from oxidative or metabolic stress-induced cell death. Plays a role in promoting protection against cell death during hypoxia by decreasing mitochondria ROS levels in a HK2-dependent manner through a mechanism that is independent of its fructose-bisphosphatase activity. In response to cardiac damage stress, mediates p53-induced inhibition of myocyte mitophagy through ROS levels reduction and the subsequent inactivation of BNIP3. Reduced mitophagy results in an enhanced apoptotic myocyte cell death, and exacerbates cardiac damage. Plays a role in adult intestinal regeneration; contributes to the growth, proliferation and survival of intestinal crypts following tissue ablation. Plays a neuroprotective role against ischemic brain damage by enhancing PPP flux and preserving mitochondria functions. Protects glioma cells from hypoxia- and ROS-induced cell death by inhibiting glycolysis and activating mitochondrial energy metabolism and oxygen consumption in a TKTL1-dependent and p53/TP53-independent manner. Plays a role in cancer cell survival by promoting DNA repair through activating PPP flux in a CDK5-ATM-dependent signaling pathway during hypoxia and/or genome stress-induced DNA damage responses. Involved in intestinal tumor progression. The polypeptide is Fructose-2,6-bisphosphatase TIGAR (Mus musculus (Mouse)).